Reading from the N-terminus, the 134-residue chain is MGSLNVSIVTPDGPVYEGVAQMVIARTKAGELGILPGHVPLVAPLKIDIVRLKVESGEEWVAVGGGFMEVNGEEVNILADTAEREQDIDIDRAEKAKQRAEAELSRAKEQKVDEVMAQLALQKAINRIHAKEHS.

This sequence belongs to the ATPase epsilon chain family. F-type ATPases have 2 components, CF(1) - the catalytic core - and CF(0) - the membrane proton channel. CF(1) has five subunits: alpha(3), beta(3), gamma(1), delta(1), epsilon(1). CF(0) has three main subunits: a, b and c.

It localises to the cell membrane. Functionally, produces ATP from ADP in the presence of a proton gradient across the membrane. This is ATP synthase epsilon chain from Listeria welshimeri serovar 6b (strain ATCC 35897 / DSM 20650 / CCUG 15529 / CIP 8149 / NCTC 11857 / SLCC 5334 / V8).